Reading from the N-terminus, the 66-residue chain is 14-3-3-like protein 2 (66 aa).

The protein belongs to the 14-3-3 family.

The sequence is that of 14-3-3-like protein 2 from Pseudotsuga menziesii (Douglas-fir).